The primary structure comprises 336 residues: uncharacterized protein (336 aa).

The NADP(+) site is built by Lys-39 and Tyr-166.

The protein belongs to the NAD(P)-dependent epimerase/dehydratase family. Dihydroflavonol-4-reductase subfamily.

The protein resides in the cytoplasm. The protein localises to the nucleus. This is an uncharacterized protein from Schizosaccharomyces pombe (strain 972 / ATCC 24843) (Fission yeast).